The chain runs to 317 residues: Ribosomal protein L11 methyltransferase (317 aa).

S-adenosyl-L-methionine contacts are provided by Thr158, Gly179, Asp201, and Asn244.

It belongs to the methyltransferase superfamily. PrmA family.

Its subcellular location is the cytoplasm. The enzyme catalyses L-lysyl-[protein] + 3 S-adenosyl-L-methionine = N(6),N(6),N(6)-trimethyl-L-lysyl-[protein] + 3 S-adenosyl-L-homocysteine + 3 H(+). Functionally, methylates ribosomal protein L11. The polypeptide is Ribosomal protein L11 methyltransferase (Streptococcus thermophilus (strain CNRZ 1066)).